The following is a 275-amino-acid chain: 4-hydroxy-tetrahydrodipicolinate reductase (275 aa).

NAD(+) contacts are provided by residues 13–18 (GAAGKM) and 108–110 (GTT). H164 functions as the Proton donor/acceptor in the catalytic mechanism. H165 contacts (S)-2,3,4,5-tetrahydrodipicolinate. The Proton donor role is filled by K168. 174–175 (GT) contributes to the (S)-2,3,4,5-tetrahydrodipicolinate binding site.

It belongs to the DapB family.

It is found in the cytoplasm. It carries out the reaction (S)-2,3,4,5-tetrahydrodipicolinate + NAD(+) + H2O = (2S,4S)-4-hydroxy-2,3,4,5-tetrahydrodipicolinate + NADH + H(+). The enzyme catalyses (S)-2,3,4,5-tetrahydrodipicolinate + NADP(+) + H2O = (2S,4S)-4-hydroxy-2,3,4,5-tetrahydrodipicolinate + NADPH + H(+). Its pathway is amino-acid biosynthesis; L-lysine biosynthesis via DAP pathway; (S)-tetrahydrodipicolinate from L-aspartate: step 4/4. Its function is as follows. Catalyzes the conversion of 4-hydroxy-tetrahydrodipicolinate (HTPA) to tetrahydrodipicolinate. The polypeptide is 4-hydroxy-tetrahydrodipicolinate reductase (Acaryochloris marina (strain MBIC 11017)).